Reading from the N-terminus, the 216-residue chain is 2-phospho-L-lactate guanylyltransferase (216 aa).

This sequence belongs to the CofC family. In terms of assembly, homodimer.

The enzyme catalyses (2S)-2-phospholactate + GTP + H(+) = (2S)-lactyl-2-diphospho-5'-guanosine + diphosphate. It participates in cofactor biosynthesis; coenzyme F420 biosynthesis. Its function is as follows. Guanylyltransferase that catalyzes the activation of (2S)-2-phospholactate (2-PL) as (2S)-lactyl-2-diphospho-5'-guanosine, via the condensation of 2-PL with GTP. It is involved in the biosynthesis of coenzyme F420, a hydride carrier cofactor. The chain is 2-phospho-L-lactate guanylyltransferase from Methanocaldococcus infernus (strain DSM 11812 / JCM 15783 / ME).